We begin with the raw amino-acid sequence, 207 residues long: A disintegrin and metalloproteinase with thrombospondin motifs 5 (207 aa).

In terms of domain architecture, Peptidase M12B spans 1–74 (HAAFTVAHEI…GHGNCLLDLP (74 aa)). Position 8 (H8) interacts with Zn(2+). Residue E9 is part of the active site. Residues H12 and H18 each coordinate Zn(2+). Intrachain disulfides connect C24/C53, C95/C117, C106/C127, C112/C146, and C140/C151. The Disintegrin domain maps to 83–164 (ELPGQTYDAS…TKKKYYSTSS (82 aa)). The N-linked (GlcNAc...) asparagine glycan is linked to N96. The region spanning 165 to 205 (HGNWGSWGSWGQCSRSCGGGVQFAYRHCNNPAPKNNGRYCT) is the TSP type-1 domain. C-linked (Man) tryptophan glycosylation is found at W168 and W171. S180 carries an O-linked (Fuc...) serine glycan.

Zn(2+) is required as a cofactor. In terms of processing, the precursor is cleaved by furin and PCSK7 outside of the cell. Glycosylated. Can be O-fucosylated by POFUT2 on a serine or a threonine residue found within the consensus sequence C1-X(2)-(S/T)-C2-G of the TSP type-1 repeat domains where C1 and C2 are the first and second cysteine residue of the repeat, respectively. Fucosylated repeats can then be further glycosylated by the addition of a beta-1,3-glucose residue by the glucosyltransferase, B3GALTL. Fucosylation mediates the efficient secretion of ADAMTS family members. Can also be C-glycosylated with one or two mannose molecules on tryptophan residues within the consensus sequence W-X-X-W of the TPRs, and N-glycosylated. These other glycosylations can also facilitate secretion.

Its subcellular location is the secreted. It localises to the extracellular space. The protein resides in the extracellular matrix. In terms of biological role, metalloproteinase that plays an important role in connective tissue organization, development, inflammation and cell migration. Extracellular matrix (ECM) degrading enzyme that shows proteolytic activity toward the hyalectan group of chondroitin sulfate proteoglycans (CSPGs) including ACAN, VCAN, BCAN and NCAN. Cleavage within the hyalectans occurs at Glu-Xaa recognition motifs. Plays a role in embryonic development, including limb and cardiac morphogenesis, and skeletal muscle development through its VCAN remodeling properties. Cleaves VCAN in the pericellular matrix surrounding myoblasts, facilitating myoblast contact and fusion which is required for skeletal muscle development and regeneration. Participates in the development of brown adipose tissue and browning of white adipose tissue. Plays an important role for T-lymphocyte migration from draining lymph nodes following viral infection. In Bos taurus (Bovine), this protein is A disintegrin and metalloproteinase with thrombospondin motifs 5 (ADAMTS5).